Reading from the N-terminus, the 314-residue chain is MNNKTIGIIGVGNVGSTLAFILATNNICSNILLKDIKNNISEAMALDISQAMQETNSNTKITACLNNEDFKDCDIIIITAGIARKPNMSRDDLLITNAKIVASVMNDISKNNPNAIIIIISNPLDSMVYTALKSSNYPKNKILGMAGTLDSARMSYFIAEKLGFPNVNIKTSVIGGHGDSMVPLIDFSTVDGKKLNEVLSKEDIDDIVIKTKNGGGQIVKLLETGSAYYAPAYSTIAMIEAILNDTKKCFACATILNGEYGYKDIVSGVPVILGKDGVEKIIELEISDFEKEQFSNSINSVKESINILENNFFN.

9–15 (IGVGNVG) lines the NAD(+) pocket. Arginine 84 and arginine 90 together coordinate substrate. NAD(+) contacts are provided by residues asparagine 97 and 120–122 (ISN). Substrate contacts are provided by asparagine 122 and arginine 153. Histidine 177 functions as the Proton acceptor in the catalytic mechanism.

Belongs to the LDH/MDH superfamily.

It catalyses the reaction (S)-malate + NAD(+) = oxaloacetate + NADH + H(+). Its function is as follows. Catalyzes the reversible oxidation of malate to oxaloacetate. The protein is Malate dehydrogenase of Aliarcobacter butzleri (strain RM4018) (Arcobacter butzleri).